The chain runs to 149 residues: Transcriptional repressor NrdR (149 aa).

The segment at 3 to 34 (CPFCCAVDTKVIDSRLVGEGSSVRRRRQCVVC) is a zinc-finger region. The region spanning 49–139 (PRVVKSNDVR…VYRSFEDIRE (91 aa)) is the ATP-cone domain.

This sequence belongs to the NrdR family. Requires Zn(2+) as cofactor.

Functionally, negatively regulates transcription of bacterial ribonucleotide reductase nrd genes and operons by binding to NrdR-boxes. The protein is Transcriptional repressor NrdR of Erwinia tasmaniensis (strain DSM 17950 / CFBP 7177 / CIP 109463 / NCPPB 4357 / Et1/99).